The chain runs to 949 residues: Leucine--tRNA ligase (949 aa).

A 'HIGH' region motif is present at residues P68 to H79. Residues V540–G562 form a disordered region. Positions K722–S726 match the 'KMSKS' region motif. K725 contributes to the ATP binding site.

It belongs to the class-I aminoacyl-tRNA synthetase family.

The protein resides in the cytoplasm. It catalyses the reaction tRNA(Leu) + L-leucine + ATP = L-leucyl-tRNA(Leu) + AMP + diphosphate. The protein is Leucine--tRNA ligase of Mycolicibacterium gilvum (strain PYR-GCK) (Mycobacterium gilvum (strain PYR-GCK)).